The chain runs to 266 residues: 4-hydroxy-tetrahydrodipicolinate reductase (266 aa).

10–15 (GPRGRM) contributes to the NAD(+) binding site. K38 contacts NADP(+). NAD(+) is bound by residues 99 to 101 (GTT) and 125 to 128 (APNF). Catalysis depends on H155, which acts as the Proton donor/acceptor. Position 156 (H156) interacts with (S)-2,3,4,5-tetrahydrodipicolinate. K159 serves as the catalytic Proton donor. Residue 165-166 (GT) coordinates (S)-2,3,4,5-tetrahydrodipicolinate.

This sequence belongs to the DapB family.

It is found in the cytoplasm. The enzyme catalyses (S)-2,3,4,5-tetrahydrodipicolinate + NAD(+) + H2O = (2S,4S)-4-hydroxy-2,3,4,5-tetrahydrodipicolinate + NADH + H(+). It catalyses the reaction (S)-2,3,4,5-tetrahydrodipicolinate + NADP(+) + H2O = (2S,4S)-4-hydroxy-2,3,4,5-tetrahydrodipicolinate + NADPH + H(+). Its pathway is amino-acid biosynthesis; L-lysine biosynthesis via DAP pathway; (S)-tetrahydrodipicolinate from L-aspartate: step 4/4. Its function is as follows. Catalyzes the conversion of 4-hydroxy-tetrahydrodipicolinate (HTPA) to tetrahydrodipicolinate. This Bacillus cereus (strain ATCC 10987 / NRS 248) protein is 4-hydroxy-tetrahydrodipicolinate reductase.